We begin with the raw amino-acid sequence, 484 residues long: uncharacterized protein (484 aa).

In terms of domain architecture, N-acetyltransferase spans Ile334 to Leu484.

This is an uncharacterized protein from Methanocaldococcus jannaschii (strain ATCC 43067 / DSM 2661 / JAL-1 / JCM 10045 / NBRC 100440) (Methanococcus jannaschii).